Consider the following 118-residue polypeptide: Large ribosomal subunit protein bL20 (118 aa).

It belongs to the bacterial ribosomal protein bL20 family.

Functionally, binds directly to 23S ribosomal RNA and is necessary for the in vitro assembly process of the 50S ribosomal subunit. It is not involved in the protein synthesizing functions of that subunit. The protein is Large ribosomal subunit protein bL20 of Staphylococcus aureus (strain Mu3 / ATCC 700698).